The chain runs to 449 residues: Gamma-aminobutyric acid receptor subunit delta (449 aa).

The N-terminal stretch at 1 to 24 (MDVLGWLLLPLLLLCTQPHHGARA) is a signal peptide. At 25-251 (MNDIGDYVGS…QLRRNRGVYI (227 aa)) the chain is on the extracellular side. Residues asparagine 103 and asparagine 106 are each glycosylated (N-linked (GlcNAc...) asparagine). Cysteine 164 and cysteine 178 are joined by a disulfide. A helical membrane pass occupies residues 252 to 271 (IQSYMPSVLLVAMSWVSFWI). Over 272-275 (SQAA) the chain is Cytoplasmic. Residues 276-298 (VPARVSLGITTVLTMTTLMVSAR) form a helical membrane-spanning segment. The Extracellular segment spans residues 299-308 (SSLPRASAIK). A helical membrane pass occupies residues 309–331 (ALDVYFWICYVFVFAALVEYAFA). At 332 to 423 (HFNADYRKKR…SRLKPIDADT (92 aa)) the chain is on the cytoplasmic side. Serine 390 is modified (phosphoserine). The helical transmembrane segment at 424–446 (IDIYARAVFPAAFAAVNIIYWAA) threads the bilayer. At 447–449 (YTM) the chain is on the extracellular side.

This sequence belongs to the ligand-gated ion channel (TC 1.A.9) family. Gamma-aminobutyric acid receptor (TC 1.A.9.5) subfamily. GABRD sub-subfamily. In terms of assembly, heteropentamer, formed by a combination of alpha (GABRA1-6), beta (GABRB1-3), gamma (GABRG1-3), delta (GABRD), epsilon (GABRE), rho (GABRR1-3), pi (GABRP) and theta (GABRQ) chains, each subunit exhibiting distinct physiological and pharmacological properties.

It is found in the cell membrane. It catalyses the reaction chloride(in) = chloride(out). In terms of biological role, delta subunit of the heteropentameric ligand-gated chloride channel gated by gamma-aminobutyric acid (GABA), a major inhibitory neurotransmitter in the brain. GABA-gated chloride channels, also named GABA(A) receptors (GABAAR), consist of five subunits arranged around a central pore and contain GABA active binding site(s) located at the alpha and beta subunit interface(s). When activated by GABA, GABAARs selectively allow the flow of chloride anions across the cell membrane down their electrochemical gradient. GABAARs containing delta/GABRD subunits are predominantly expressed and located in extrasynaptic or perisynaptic positions on hippocampus and cerebellar granule cells, and contribute to the tonic GABAergic inhibition. GABAAR containing alpha-4-beta-3-delta subunits can simultaneously bind GABA and histamine where histamine binds at the interface of two neighboring beta subunits, which may be involved in the regulation of sleep and wakefulness. In Mus musculus (Mouse), this protein is Gamma-aminobutyric acid receptor subunit delta.